Reading from the N-terminus, the 262-residue chain is Ubiquinone biosynthesis protein COQ4, mitochondrial (262 aa).

Zn(2+) is bound by residues histidine 154, aspartate 155, histidine 158, and glutamate 170. The segment at 243–262 is disordered; the sequence is LGIEQPPDLRQMKKDMAKKK. A compositionally biased stretch (basic and acidic residues) spans 252-262; it reads RQMKKDMAKKK.

Belongs to the COQ4 family. Component of a multi-subunit COQ enzyme complex, composed of at least COQ3, COQ4, COQ5, COQ6, COQ7 and COQ9. Requires Zn(2+) as cofactor.

The protein resides in the mitochondrion inner membrane. The enzyme catalyses a 4-hydroxy-3-methoxy-5-(all-trans-polyprenyl)benzoate + H(+) = a 2-methoxy-6-(all-trans-polyprenyl)phenol + CO2. It participates in cofactor biosynthesis; ubiquinone biosynthesis. Lyase that catalyzes the C1-decarboxylation of 4-hydroxy-3-methoxy-5-(all-trans-polyprenyl)benzoic acid into 2-methoxy-6-(all-trans-polyprenyl)phenol during ubiquinone biosynthesis. In Yarrowia lipolytica (strain CLIB 122 / E 150) (Yeast), this protein is Ubiquinone biosynthesis protein COQ4, mitochondrial.